The chain runs to 447 residues: Glutamate--tRNA ligase 2 (447 aa).

The short motif at 8–18 (PSPTGYLHVGN) is the 'HIGH' region element. A 'KMSKS' region motif is present at residues 239 to 243 (KLSKR). Lysine 242 serves as a coordination point for ATP.

Belongs to the class-I aminoacyl-tRNA synthetase family. Glutamate--tRNA ligase type 1 subfamily. In terms of assembly, monomer.

It localises to the cytoplasm. The catalysed reaction is tRNA(Glu) + L-glutamate + ATP = L-glutamyl-tRNA(Glu) + AMP + diphosphate. In terms of biological role, catalyzes the attachment of glutamate to tRNA(Glu) in a two-step reaction: glutamate is first activated by ATP to form Glu-AMP and then transferred to the acceptor end of tRNA(Glu). In Granulibacter bethesdensis (strain ATCC BAA-1260 / CGDNIH1), this protein is Glutamate--tRNA ligase 2.